Consider the following 120-residue polypeptide: Non-specific lipid-transfer protein 1 (120 aa).

The signal sequence occupies residues 1–25; the sequence is MARSMKLACVALVICMVVIAPMAEA. 4 cysteine pairs are disulfide-bonded: cysteine 29–cysteine 78, cysteine 39–cysteine 55, cysteine 56–cysteine 101, and cysteine 76–cysteine 115. A propeptide is located at residue phenylalanine 120.

It belongs to the plant LTP family. Expressed in roots, stem, leaves and tendrils of the mature plant.

Its function is as follows. Plant non-specific lipid-transfer proteins transfer phospholipids as well as galactolipids across membranes. May play a role in wax or cutin deposition in the cell walls of expanding epidermal cells and certain secretory tissues. Binds saturated and unsaturated lipids, jasmonic acid and lysolipids. Has antifungal activity against A.niger VKM F-2259 (IC(50)=40 uM), F.oxysporum TCXA-4 (IC(50)=20-40), F.solani VKM F-142 (IC(50)=20-40 uM) and N.crassa VKM F-184 (IC(50)=40 uM). Has weak antibacterial activity against A.tumefaciens A281, C.michiganensis VKM Ac-1144 and P.syringae VKM B-1546. The protein is Non-specific lipid-transfer protein 1 of Pisum sativum (Garden pea).